A 384-amino-acid chain; its full sequence is Cyanate transport protein CynX (384 aa).

12 helical membrane-spanning segments follow: residues 3 to 23, 34 to 54, 68 to 88, 89 to 109, 122 to 142, 153 to 173, 204 to 224, 235 to 255, 263 to 283, 287 to 307, 322 to 342, and 354 to 374; these read LVLV…GPLL, FSVA…LALA, VAIS…YPQS, ALLL…QAVM, PLVM…GAAI, WYQT…AWWW, YFGL…AFYI, SLLA…PAMA, LLML…WLPM, VLWA…CLLL, VAFM…FSGV, and WAFH…FAPV.

Belongs to the major facilitator superfamily. Cyanate porter (TC 2.A.1.17) family.

The protein localises to the cell inner membrane. Its function is as follows. This protein is part of an active transport system that transports exogenous cyanate into E.coli cells. The chain is Cyanate transport protein CynX (cynX) from Escherichia coli (strain K12).